Consider the following 185-residue polypeptide: Large ribosomal subunit protein uL5 (185 aa).

Belongs to the universal ribosomal protein uL5 family. As to quaternary structure, part of the 50S ribosomal subunit; part of the 5S rRNA/L5/L18/L25 subcomplex. Contacts the 5S rRNA and the P site tRNA. Forms a bridge to the 30S subunit in the 70S ribosome.

Its function is as follows. This is one of the proteins that bind and probably mediate the attachment of the 5S RNA into the large ribosomal subunit, where it forms part of the central protuberance. In the 70S ribosome it contacts protein S13 of the 30S subunit (bridge B1b), connecting the 2 subunits; this bridge is implicated in subunit movement. Contacts the P site tRNA; the 5S rRNA and some of its associated proteins might help stabilize positioning of ribosome-bound tRNAs. The polypeptide is Large ribosomal subunit protein uL5 (Streptomyces avermitilis (strain ATCC 31267 / DSM 46492 / JCM 5070 / NBRC 14893 / NCIMB 12804 / NRRL 8165 / MA-4680)).